The following is a 317-amino-acid chain: MTCKIIGSGGYLPPKIISNDELTKFVDTNDKWIRTRTGILQRHIAGDAEYTSHLAFKSAQKAIEDAMISVDDIDLIIICTTTPDNSFPSVATKLHGYLGLTNIPSFDLQAVCAGFIYGLQLAHSLIVSGKYKTILLIGAEKMTSLLDWNDRSTCVLFGDGAGSVILQRSNDDSGLIDSNIFSSGTDYEILYTSGGTSMNGTSGKIVMQGQKLFRHAIEKMLQSIEDLLYANQFSVSDIDYFIPHQANIRIINKLAELLNIEEHKVVKTVEKHANCSAASIPLALSALKESGKIKKGDILLFSAIGAGLTWGGALIRW.

Residues Cys-112 and His-244 contribute to the active site. An ACP-binding region spans residues 245–249 (QANIR). Residue Asn-274 is part of the active site.

It belongs to the thiolase-like superfamily. FabH family. Homodimer.

It localises to the cytoplasm. The enzyme catalyses malonyl-[ACP] + acetyl-CoA + H(+) = 3-oxobutanoyl-[ACP] + CO2 + CoA. Its pathway is lipid metabolism; fatty acid biosynthesis. Its function is as follows. Catalyzes the condensation reaction of fatty acid synthesis by the addition to an acyl acceptor of two carbons from malonyl-ACP. Catalyzes the first condensation reaction which initiates fatty acid synthesis and may therefore play a role in governing the total rate of fatty acid production. Possesses both acetoacetyl-ACP synthase and acetyl transacylase activities. Its substrate specificity determines the biosynthesis of branched-chain and/or straight-chain of fatty acids. The sequence is that of Beta-ketoacyl-[acyl-carrier-protein] synthase III from Rickettsia prowazekii (strain Madrid E).